Reading from the N-terminus, the 492-residue chain is Sestrin-3 (492 aa).

An N-terminal domain; may mediate the alkylhydroperoxide reductase activity region spans residues Leu-62–Ile-243. Cys-121 (cysteine sulfenic acid (-SOH) intermediate) is an active-site residue. The tract at residues Pro-310–Thr-492 is C-terminal domain; mediates TORC1 regulation. L-leucine is bound by residues Thr-386–Thr-389, Thr-398, and Glu-463.

The protein belongs to the sestrin family. In terms of assembly, interacts with the GATOR2 complex which is composed of MIOS, SEC13, SEH1L, WDR24 and WDR59; the interaction is not regulated by leucine. Interacts with RRAGA, RRAGB, RRAGC and RRAGD; may function as a guanine nucleotide dissociation inhibitor for RRAGs and regulate them. Interacts with the TORC2 complex; through RICTOR. Detected in liver and skeletal muscles.

The protein localises to the cytoplasm. It carries out the reaction a hydroperoxide + L-cysteinyl-[protein] = S-hydroxy-L-cysteinyl-[protein] + an alcohol. Its function is as follows. May function as an intracellular leucine sensor that negatively regulates the TORC1 signaling pathway. May also regulate the insulin-receptor signaling pathway through activation of TORC2. This metabolic regulator may also play a role in protection against oxidative and genotoxic stresses. May prevent the accumulation of reactive oxygen species (ROS) through the alkylhydroperoxide reductase activity born by the N-terminal domain of the protein. This Mus musculus (Mouse) protein is Sestrin-3.